A 399-amino-acid chain; its full sequence is Elongation factor Tu (399 aa).

Residues 10–209 (KPHVNIGTIG…EVDAYIPTPE (200 aa)) enclose the tr-type G domain. The interval 19–26 (GHVDHGKT) is G1. 19-26 (GHVDHGKT) is a GTP binding site. Thr-26 is a Mg(2+) binding site. Positions 60-64 (GITIA) are G2. Positions 81-84 (DCPG) are G3. GTP-binding positions include 81–85 (DCPGH) and 136–139 (NKQD). A G4 region spans residues 136–139 (NKQD). The G5 stretch occupies residues 174–176 (SAL).

Belongs to the TRAFAC class translation factor GTPase superfamily. Classic translation factor GTPase family. EF-Tu/EF-1A subfamily. As to quaternary structure, monomer.

It localises to the cytoplasm. The catalysed reaction is GTP + H2O = GDP + phosphate + H(+). In terms of biological role, GTP hydrolase that promotes the GTP-dependent binding of aminoacyl-tRNA to the A-site of ribosomes during protein biosynthesis. In Helicobacter pylori (strain G27), this protein is Elongation factor Tu.